The primary structure comprises 186 residues: Protein SPMIP2 (186 aa).

The tract at residues 163-186 is disordered; the sequence is SSLPRASKPPKLPKLPKKEKKRKH. Over residues 176–186 the composition is skewed to basic residues; that stretch reads KLPKKEKKRKH.

The polypeptide is Protein SPMIP2 (Homo sapiens (Human)).